The chain runs to 355 residues: Histidinol-phosphate aminotransferase 2 (355 aa).

The residue at position 210 (Lys-210) is an N6-(pyridoxal phosphate)lysine.

This sequence belongs to the class-II pyridoxal-phosphate-dependent aminotransferase family. Histidinol-phosphate aminotransferase subfamily. As to quaternary structure, homodimer. The cofactor is pyridoxal 5'-phosphate.

The enzyme catalyses L-histidinol phosphate + 2-oxoglutarate = 3-(imidazol-4-yl)-2-oxopropyl phosphate + L-glutamate. It functions in the pathway amino-acid biosynthesis; L-histidine biosynthesis; L-histidine from 5-phospho-alpha-D-ribose 1-diphosphate: step 7/9. This is Histidinol-phosphate aminotransferase 2 from Gluconobacter oxydans (strain 621H) (Gluconobacter suboxydans).